The primary structure comprises 251 residues: Putative glutamine amidotransferase YLR126C (251 aa).

A Glutamine amidotransferase type-1 domain is found at 48 to 232 (EVFHVQKNVF…NRYERQCQEL (185 aa)). Residues Cys112, His198, and Glu200 each act as for GATase activity in the active site.

Its subcellular location is the cytoplasm. In terms of biological role, may have a role in copper and iron homeostasis. This chain is Putative glutamine amidotransferase YLR126C, found in Saccharomyces cerevisiae (strain ATCC 204508 / S288c) (Baker's yeast).